The primary structure comprises 216 residues: MEPAFWHKRWADNQIGFHQLQVNPYLQAHWPALGLAPGARVLVPLCGKSLDMLWLAAQGYRVLGVELSRRAVEDFFTEHGLPAQVTQHGAFEAWRSDEVEIWCGDVFALRAEDLADCAGVYDRAALIALPPEMRERYMALLGAKLPTACRGVLVTLDYDQALIDGPPFSVPDAEVRAGFSGWQVDEVEGLEILEDSPKFIKAGVSSLVERAYRLTR.

S-adenosyl-L-methionine is bound by residues Trp-10, Leu-45, Glu-66, and Arg-123.

This sequence belongs to the class I-like SAM-binding methyltransferase superfamily. TPMT family.

It is found in the cytoplasm. The catalysed reaction is S-adenosyl-L-methionine + a thiopurine = S-adenosyl-L-homocysteine + a thiopurine S-methylether.. The chain is Thiopurine S-methyltransferase from Pseudomonas entomophila (strain L48).